Reading from the N-terminus, the 179-residue chain is Methylated-DNA--protein-cysteine methyltransferase (179 aa).

The Nucleophile; methyl group acceptor role is filled by Cys-130.

The protein belongs to the MGMT family.

Its subcellular location is the cytoplasm. It catalyses the reaction a 6-O-methyl-2'-deoxyguanosine in DNA + L-cysteinyl-[protein] = S-methyl-L-cysteinyl-[protein] + a 2'-deoxyguanosine in DNA. The catalysed reaction is a 4-O-methyl-thymidine in DNA + L-cysteinyl-[protein] = a thymidine in DNA + S-methyl-L-cysteinyl-[protein]. Functionally, involved in the cellular defense against the biological effects of O6-methylguanine (O6-MeG) and O4-methylthymine (O4-MeT) in DNA. Repairs the methylated nucleobase in DNA by stoichiometrically transferring the methyl group to a cysteine residue in the enzyme. This is a suicide reaction: the enzyme is irreversibly inactivated. In Haemophilus influenzae (strain ATCC 51907 / DSM 11121 / KW20 / Rd), this protein is Methylated-DNA--protein-cysteine methyltransferase.